A 272-amino-acid chain; its full sequence is Anamorsin homolog (272 aa).

The segment at 1-156 is N-terminal SAM-like domain; the sequence is MDSMMNQKTV…KIGSSFALKK (156 aa). The tract at residues 157 to 185 is linker; it reads PVTNLFKIDLDDDVDLIDEDSLLTEEDLM. [2Fe-2S] cluster contacts are provided by cysteine 195, cysteine 202, cysteine 205, and cysteine 207. Residues 195–207 are fe-S binding site A; it reads CETTKKACKNCVC. 4 residues coordinate [4Fe-4S] cluster: cysteine 233, cysteine 236, cysteine 244, and cysteine 247. 2 short sequence motifs (cx2C motif) span residues 233 to 236 and 244 to 247; these read CGSC and CGTC. The tract at residues 233 to 247 is fe-S binding site B; the sequence is CGSCGLGDAFRCGTC.

Belongs to the anamorsin family. Monomer. Interacts with ATR3. The cofactor is [2Fe-2S] cluster. [4Fe-4S] cluster serves as cofactor.

It localises to the cytoplasm. The protein resides in the mitochondrion intermembrane space. Its function is as follows. Component of the cytosolic iron-sulfur (Fe-S) protein assembly (CIA) machinery. Required for the maturation of extramitochondrial Fe-S proteins. Part of an electron transfer chain functioning in an early step of cytosolic Fe-S biogenesis, facilitating the de novo assembly of a [4Fe-4S] cluster on the cytosolic Fe-S scaffold complex. Electrons are transferred from NADPH via FAD- and FMN-containing diflavin oxidoreductase TAH18/ATR3. Together with the diflavin oxidoreductase, also required for the assembly of the diferric tyrosyl radical cofactor of ribonucleotide reductase (RNR), probably by providing electrons for reduction during radical cofactor maturation in the catalytic small subunit. Required for embryo development. This chain is Anamorsin homolog, found in Arabidopsis thaliana (Mouse-ear cress).